The chain runs to 344 residues: Lipase chaperone (344 aa).

A helical transmembrane segment spans residues 14 to 34; the sequence is AVVYGVVGLAAIAGVAMWSGA. The disordered stretch occupies residues 39-78; sequence ATGASGESPEASVAGGSVTAPPQAAVPASTGLPPSLAGSS.

Belongs to the lipase chaperone family.

Its subcellular location is the cell inner membrane. Functionally, may be involved in the folding of the extracellular lipase during its passage through the periplasm. The chain is Lipase chaperone (lifO) from Pseudomonas sp. (strain KWI-56).